A 1018-amino-acid polypeptide reads, in one-letter code: Pleckstrin homology domain-containing family M member 2 (1018 aa).

An N-acetylmethionine modification is found at M1. The interaction with KIF5B stretch occupies residues 1–289 (MEPREVKDRI…PDQPDACTEL (289 aa)). In terms of domain architecture, RUN spans 36–158 (RNHDKVLQRL…IRFDLDLDAP (123 aa)). Disordered regions lie at residues 210 to 367 (SAIA…SSEL), 407 to 440 (TWCSHADPPEQSFRAGSPGEAPEKPPFCDFSEGL), 452 to 520 (ESPS…DSQL), 526 to 545 (EPLVSQEPVPEPVSQPEPGT), and 555 to 583 (DQPSPCLSSAEDSGVEEGQGSPSEMTHPS). A compositionally biased stretch (low complexity) spans 230–245 (STASDLTSSKTSTKSP). The segment covering 258–270 (ETASSDTTPVHTT) has biased composition (polar residues). Residues 294–306 (VTKKKKIGKKKKT) are compositionally biased toward basic residues. Composition is skewed to polar residues over residues 316–325 (HPTSSQQKCG) and 347–367 (VLASPQEQGEGLSSTAGSSEL). Position 423 is a phosphoserine (S423). In terms of domain architecture, PH spans 770 to 872 (TITKEGMLHY…WMQHLCQAVS (103 aa)).

Interacts with KLC2 (via TPR repeats). Interacts with KIF5B. Interacts with BORCS5. Interacts (via RUN domain) with ARL8B (GTP-bound form); PLEKHM1 and PLEKHM2 compete for interaction with ARL8B. Interacts with ARL8A.

Its subcellular location is the cytoplasm. The protein localises to the lysosome membrane. In terms of biological role, plays a role in lysosomes movement and localization at the cell periphery acting as an effector of ARL8B. Required for ARL8B to exert its effects on lysosome location, recruits kinesin-1 to lysosomes and hence direct their movement toward microtubule plus ends. Binding to ARL8B provides a link from lysosomal membranes to plus-end-directed motility. Critical factor involved in NK cell-mediated cytotoxicity. Drives the polarization of cytolytic granules and microtubule-organizing centers (MTOCs) toward the immune synapse between effector NK lymphocytes and target cells. Required for maintenance of the Golgi apparatus organization. May play a role in membrane tubulation. This Mus musculus (Mouse) protein is Pleckstrin homology domain-containing family M member 2.